The primary structure comprises 511 residues: Protoheme IX farnesyltransferase, mitochondrial (511 aa).

Residues 1–23 (MSSSTESLPGTLRRTLTTSRAPA) constitute a mitochondrion transit peptide. 2 disordered regions span residues 1–27 (MSSSTESLPGTLRRTLTTSRAPAATSS) and 50–136 (HDSA…LAPD). Low complexity-rich tracts occupy residues 52–79 (SASSQRSTTVASTTSTTADAADGSSSTT), 104–115 (RKAAAAAAAAAA), and 126–136 (PDAPTADLAPD). A run of 8 helical transmembrane segments spans residues 168-188 (LTVLVVLSAMVPYALYPVPSF), 197-217 (SLAPSLSPLTLLFLTTGTTLC), 253-273 (AAVLFAVGCGLAGTLALYFGV), 275-295 (PTVSFLGAANIALYAGAYTPL), 303-323 (TWVGAIVGGIPPLMGWAAAAG), 344-364 (LGGWLFAGLLFAWQFPHFMPL), 398-418 (AFIPLCVGLSATGVTEWSFAV), and 444-464 (ARGLFWASVWHLPVIMVLALA).

This sequence belongs to the UbiA prenyltransferase family.

Its subcellular location is the mitochondrion membrane. In terms of biological role, converts protoheme IX and farnesyl diphosphate to heme O. The polypeptide is Protoheme IX farnesyltransferase, mitochondrial (pft-1) (Neurospora crassa (strain ATCC 24698 / 74-OR23-1A / CBS 708.71 / DSM 1257 / FGSC 987)).